The sequence spans 118 residues: Ribonuclease P protein component (118 aa).

Belongs to the RnpA family. Consists of a catalytic RNA component (M1 or rnpB) and a protein subunit.

It catalyses the reaction Endonucleolytic cleavage of RNA, removing 5'-extranucleotides from tRNA precursor.. In terms of biological role, RNaseP catalyzes the removal of the 5'-leader sequence from pre-tRNA to produce the mature 5'-terminus. It can also cleave other RNA substrates such as 4.5S RNA. The protein component plays an auxiliary but essential role in vivo by binding to the 5'-leader sequence and broadening the substrate specificity of the ribozyme. The protein is Ribonuclease P protein component of Shewanella sp. (strain ANA-3).